A 114-amino-acid polypeptide reads, in one-letter code: Large ribosomal subunit protein uL22c (114 aa).

It belongs to the universal ribosomal protein uL22 family. Part of the 50S ribosomal subunit.

It localises to the plastid. It is found in the chloroplast. In terms of biological role, this protein binds specifically to 23S rRNA. Its function is as follows. The globular domain of the protein is located near the polypeptide exit tunnel on the outside of the subunit, while an extended beta-hairpin is found that lines the wall of the exit tunnel in the center of the 70S ribosome. The sequence is that of Large ribosomal subunit protein uL22c (rpl22) from Gracilaria tenuistipitata var. liui (Red alga).